Reading from the N-terminus, the 98-residue chain is Large ribosomal subunit protein eL21 (98 aa).

It belongs to the eukaryotic ribosomal protein eL21 family.

In Korarchaeum cryptofilum (strain OPF8), this protein is Large ribosomal subunit protein eL21.